The primary structure comprises 134 residues: Probable glycine cleavage system H protein (134 aa).

In terms of domain architecture, Lipoyl-binding spans Thr-29–Lys-110. Lys-70 bears the N6-lipoyllysine mark.

Belongs to the GcvH family. As to quaternary structure, the glycine cleavage system is composed of four proteins: P, T, L and H. (R)-lipoate serves as cofactor.

In terms of biological role, the glycine cleavage system catalyzes the degradation of glycine. The H protein shuttles the methylamine group of glycine from the P protein to the T protein. This Pyrococcus abyssi (strain GE5 / Orsay) protein is Probable glycine cleavage system H protein.